Here is a 292-residue protein sequence, read N- to C-terminus: ATP synthase gamma chain (292 aa).

The protein belongs to the ATPase gamma chain family. As to quaternary structure, F-type ATPases have 2 components, CF(1) - the catalytic core - and CF(0) - the membrane proton channel. CF(1) has five subunits: alpha(3), beta(3), gamma(1), delta(1), epsilon(1). CF(0) has three main subunits: a, b and c.

It is found in the cell inner membrane. Its function is as follows. Produces ATP from ADP in the presence of a proton gradient across the membrane. The gamma chain is believed to be important in regulating ATPase activity and the flow of protons through the CF(0) complex. The protein is ATP synthase gamma chain of Methylobacterium nodulans (strain LMG 21967 / CNCM I-2342 / ORS 2060).